A 248-amino-acid chain; its full sequence is Uracil-DNA glycosylase (248 aa).

The active-site Proton acceptor is Asp85.

This sequence belongs to the uracil-DNA glycosylase (UDG) superfamily. UNG family.

It is found in the cytoplasm. It catalyses the reaction Hydrolyzes single-stranded DNA or mismatched double-stranded DNA and polynucleotides, releasing free uracil.. In terms of biological role, excises uracil residues from the DNA which can arise as a result of misincorporation of dUMP residues by DNA polymerase or due to deamination of cytosine. This chain is Uracil-DNA glycosylase, found in Deinococcus deserti (strain DSM 17065 / CIP 109153 / LMG 22923 / VCD115).